The chain runs to 605 residues: Acetoin dehydrogenase operon transcriptional activator AcoR (605 aa).

Residues 295-520 (VIGQSGRSQA…LFNVFERLSI (226 aa)) form the Sigma-54 factor interaction domain. ATP is bound by residues 323 to 330 (GETGTGKE) and 387 to 396 (ANQGTLFLDE). The segment at residues 578–597 (VSQAAKISGIPRSTFYKRLK) is a DNA-binding region (H-T-H motif).

In terms of biological role, acts as a transcriptional activator of the acoABCL operon encoding the acetoin dehydrogenase complex. The protein is Acetoin dehydrogenase operon transcriptional activator AcoR (acoR) of Bacillus subtilis (strain 168).